The sequence spans 365 residues: 3-isopropylmalate dehydrogenase (365 aa).

An NAD(+)-binding site is contributed by 80–91; that stretch reads GPKWGTGEVRPE. 4 residues coordinate substrate: arginine 98, arginine 108, arginine 137, and aspartate 226. Residues aspartate 226, aspartate 251, and aspartate 255 each contribute to the Mg(2+) site. Position 290–301 (290–301) interacts with NAD(+); the sequence is GSAPDLPKNKVN.

Belongs to the isocitrate and isopropylmalate dehydrogenases family. In terms of assembly, homodimer. Requires Mg(2+) as cofactor. It depends on Mn(2+) as a cofactor.

It localises to the cytoplasm. The catalysed reaction is (2R,3S)-3-isopropylmalate + NAD(+) = 4-methyl-2-oxopentanoate + CO2 + NADH. It functions in the pathway amino-acid biosynthesis; L-leucine biosynthesis; L-leucine from 3-methyl-2-oxobutanoate: step 3/4. Its function is as follows. Catalyzes the oxidation of 3-carboxy-2-hydroxy-4-methylpentanoate (3-isopropylmalate) to 3-carboxy-4-methyl-2-oxopentanoate. The product decarboxylates to 4-methyl-2 oxopentanoate. This Candida boidinii (Yeast) protein is 3-isopropylmalate dehydrogenase (LEU2).